Consider the following 128-residue polypeptide: UPF0102 protein BCG_2919c (128 aa).

Belongs to the UPF0102 family.

The polypeptide is UPF0102 protein BCG_2919c (Mycobacterium bovis (strain BCG / Pasteur 1173P2)).